The chain runs to 734 residues: Elongation factor 2 (734 aa).

The tr-type G domain maps to 18-259; that stretch reads EQIRNIGITA…MVVKYVPNPR (242 aa). Residues 27–34, 93–97, and 147–150 contribute to the GTP site; these read AHVDHGKT, DTPGH, and NKID. A Diphthamide modification is found at His-600.

This sequence belongs to the TRAFAC class translation factor GTPase superfamily. Classic translation factor GTPase family. EF-G/EF-2 subfamily.

The protein resides in the cytoplasm. Its function is as follows. Catalyzes the GTP-dependent ribosomal translocation step during translation elongation. During this step, the ribosome changes from the pre-translocational (PRE) to the post-translocational (POST) state as the newly formed A-site-bound peptidyl-tRNA and P-site-bound deacylated tRNA move to the P and E sites, respectively. Catalyzes the coordinated movement of the two tRNA molecules, the mRNA and conformational changes in the ribosome. This Desulfurococcus mucosus (Desulfurococcus mobilis) protein is Elongation factor 2 (fusA).